Reading from the N-terminus, the 395-residue chain is MDFNMKKLASDAGIFFTRAVQFTEEKFGQAEKTELDAHFESLLARADSTKNWTEKILRQTEVLLQPNPSARVEEFLYEKLDRKVPSRVTNGELLAQYMAEAASELGPTTPYGKTLIKVAEAEKHLGAAERDFIHTASINFLTPLRNFLEGDWKTISKERRLLQNRRLDLDASKARLKKAKAAEAKATTVPDFQETRPRNYILSASASALWNDEVDKAEQELRVAQTEFDRQAEVTRLLLEGISSTHVNHLRCLHEFIESQTTYYAQCYRHMLDLQKQLGRFPGTFVGTAEPASPPLSSTSPTTTAATMPMGPSVADLAPPGEAALRLEEVAPPASGTRKARVLYDYEAADSSELALLADELITVYSLPGMDPDWLIGERGNKKGKVPVTYLELLS.

N-acetylmethionine is present on Met-1. The interval 1 to 27 (MDFNMKKLASDAGIFFTRAVQFTEEKF) is membrane-binding amphipathic helix. Ser-10 carries the post-translational modification Phosphoserine. A BAR domain is found at 24–287 (EEKFGQAEKT…LGRFPGTFVG (264 aa)). 2 coiled-coil regions span residues 116-132 (IKVAEAEKHLGAAERDF) and 206-240 (ASALWNDEVDKAEQELRVAQTEFDRQAEVTRLLLE). In terms of domain architecture, SH3 spans 335–395 (SGTRKARVLY…VPVTYLELLS (61 aa)). Residue Ser-395 is modified to Phosphoserine.

The protein belongs to the endophilin family. Homodimer, and heterodimer with SH3GLB1.

It is found in the cytoplasm. The sequence is that of Endophilin-B2 (SH3GLB2) from Bos taurus (Bovine).